A 268-amino-acid polypeptide reads, in one-letter code: Nickel import ATP-binding protein NikE (268 aa).

In terms of domain architecture, ABC transporter spans 4–252 (LNISGLSHHY…SSDAGRVLQN (249 aa)). 45 to 52 (GRSGCGKS) serves as a coordination point for ATP.

It belongs to the ABC transporter superfamily. Nickel importer (TC 3.A.1.5.3) family. As to quaternary structure, the complex is composed of two ATP-binding proteins (NikD and NikE), two transmembrane proteins (NikB and NikC) and a solute-binding protein (NikA).

It localises to the cell inner membrane. The catalysed reaction is Ni(2+)(out) + ATP + H2O = Ni(2+)(in) + ADP + phosphate + H(+). Its function is as follows. Part of the ABC transporter complex NikABCDE involved in nickel import. Responsible for energy coupling to the transport system. The chain is Nickel import ATP-binding protein NikE from Escherichia coli (strain K12).